Reading from the N-terminus, the 507-residue chain is Chromosomal replication initiator protein DnaA (507 aa).

A domain I, interacts with DnaA modulators region spans residues 1–112; that stretch reads MTDDPGSGFT…PATDEADDTT (112 aa). Residues 99–162 form a disordered region; it reads RIAPPATDEA…ERPRNTDSAT (64 aa). The span at 113 to 127 shows a compositional bias: polar residues; sequence VPPSENPATTSPDTT. A domain II region spans residues 113–166; sequence VPPSENPATTSPDTTTDNDEIDDSAAARGDNQHSWPSYFTERPRNTDSATAGVT. Positions 167-383 are domain III, AAA+ region; the sequence is SLNRRYTFDT…GALIRVTAFA (217 aa). ATP is bound by residues Gly211, Gly213, Lys214, and Thr215. Residues 384–507 are domain IV, binds dsDNA; it reads SLNKTPIDKA…TTRIRQRSKR (124 aa).

This sequence belongs to the DnaA family. Oligomerizes as a right-handed, spiral filament on DNA at oriC.

Its subcellular location is the cytoplasm. In terms of biological role, plays an essential role in the initiation and regulation of chromosomal replication. ATP-DnaA binds to the origin of replication (oriC) to initiate formation of the DNA replication initiation complex once per cell cycle. Binds the DnaA box (a 9 base pair repeat at the origin) and separates the double-stranded (ds)DNA. Forms a right-handed helical filament on oriC DNA; dsDNA binds to the exterior of the filament while single-stranded (ss)DNA is stabiized in the filament's interior. The ATP-DnaA-oriC complex binds and stabilizes one strand of the AT-rich DNA unwinding element (DUE), permitting loading of DNA polymerase. After initiation quickly degrades to an ADP-DnaA complex that is not apt for DNA replication. Binds acidic phospholipids. The protein is Chromosomal replication initiator protein DnaA of Mycobacterium bovis (strain BCG / Tokyo 172 / ATCC 35737 / TMC 1019).